Reading from the N-terminus, the 35-residue chain is Photosystem II reaction center protein Psb30 (35 aa).

Residues 7 to 27 (LIANFGALALITLAGPAVIFI) traverse the membrane as a helical segment.

This sequence belongs to the Psb30/Ycf12 family. PSII is composed of 1 copy each of membrane proteins PsbA, PsbB, PsbC, PsbD, PsbE, PsbF, PsbH, PsbI, PsbJ, PsbK, PsbL, PsbM, PsbT, PsbX, PsbY, PsbZ, Psb30/Ycf12, peripheral proteins PsbO, CyanoQ (PsbQ), PsbU, PsbV and a large number of cofactors. It forms dimeric complexes.

The protein localises to the cellular thylakoid membrane. Its function is as follows. A core subunit of photosystem II (PSII), probably helps stabilize the reaction center. This is Photosystem II reaction center protein Psb30 from Synechococcus sp. (strain CC9311).